Reading from the N-terminus, the 330-residue chain is MSKVSFIGGGSFGTALAILLAEKGNTVSIYNRDKKVVDDININRRNDKYIKNLEILSNIKAFDNLEKATENTEYIVLAIPSHTIRSICKQLKSKIKQETIIISIAKGIEEHTDKRLSEVIKEELNNPIVVLSGPSHAEEVVLKLPTTLVVSSENMNSASEVQNLFMTSFFRVYTNQDLVGVEVGGAVKNIIALAAGILDGLGYGDNTKAALMTRGMKEISRIGSALGGREETFYGLTGMGDLIVTCTSNHSRNRKAGLLIGSGMGVDKAIKEIGMVVEGVKACKAFYELKEKIGVSMPITDILYKVLFEKKDPKLGIEELMLREKKSEIF.

4 residues coordinate NADPH: S11, F12, R32, and K106. Sn-glycerol 3-phosphate contacts are provided by K106, G133, and S135. NADPH is bound at residue A137. Sn-glycerol 3-phosphate-binding residues include K188, D241, S251, R252, and N253. K188 acts as the Proton acceptor in catalysis. Residue R252 participates in NADPH binding. NADPH-binding residues include V276 and E278.

The protein belongs to the NAD-dependent glycerol-3-phosphate dehydrogenase family.

The protein localises to the cytoplasm. It carries out the reaction sn-glycerol 3-phosphate + NAD(+) = dihydroxyacetone phosphate + NADH + H(+). It catalyses the reaction sn-glycerol 3-phosphate + NADP(+) = dihydroxyacetone phosphate + NADPH + H(+). It functions in the pathway membrane lipid metabolism; glycerophospholipid metabolism. In terms of biological role, catalyzes the reduction of the glycolytic intermediate dihydroxyacetone phosphate (DHAP) to sn-glycerol 3-phosphate (G3P), the key precursor for phospholipid synthesis. The polypeptide is Glycerol-3-phosphate dehydrogenase [NAD(P)+] (Clostridium botulinum (strain Eklund 17B / Type B)).